The chain runs to 212 residues: MTHSKRWLEEHAKDPYVKRAKKEGYPSRAAYKLLEIHQKYKLFKPSMNVIDLGAAPGGWSQVAKDLVGPKGVVIAIDLLPMQSMLDVIFIQGDFNEPEIFNQLEAIVAKKTLTGQVDLVISDMAPNISGIKNVDQSRSLHLVELAWDCAQKLLARGGTFLVKVFQGPGVDRFLINLRPYFNQVKFLKPSASRSRSSEIYILAGEFLGYNQRV.

Residues glycine 57, tryptophan 59, aspartate 77, aspartate 93, and aspartate 122 each contribute to the S-adenosyl-L-methionine site. Lysine 162 serves as the catalytic Proton acceptor.

It belongs to the class I-like SAM-binding methyltransferase superfamily. RNA methyltransferase RlmE family.

Its subcellular location is the cytoplasm. The catalysed reaction is uridine(2552) in 23S rRNA + S-adenosyl-L-methionine = 2'-O-methyluridine(2552) in 23S rRNA + S-adenosyl-L-homocysteine + H(+). Specifically methylates the uridine in position 2552 of 23S rRNA at the 2'-O position of the ribose in the fully assembled 50S ribosomal subunit. The protein is Ribosomal RNA large subunit methyltransferase E of Coxiella burnetii (strain RSA 331 / Henzerling II).